The primary structure comprises 101 residues: Iron-sulfur cluster assembly protein CyaY (101 aa).

The protein belongs to the frataxin family.

In terms of biological role, involved in iron-sulfur (Fe-S) cluster assembly. May act as a regulator of Fe-S biogenesis. This is Iron-sulfur cluster assembly protein CyaY from Rickettsia felis (strain ATCC VR-1525 / URRWXCal2) (Rickettsia azadi).